The sequence spans 620 residues: Probable potassium transport system protein Kup (620 aa).

A run of 12 helical transmembrane segments spans residues 8 to 28, 50 to 70, 102 to 122, 136 to 156, 168 to 188, 211 to 231, 246 to 266, 284 to 304, 336 to 356, 368 to 388, 393 to 413, and 415 to 435; these read VGLL…SPLY, VLSL…VILI, MLLG…TPAI, PDLK…LFAI, FGPV…ANIV, LMSF…EALY, WFSL…ALLI, MVMP…QAVI, IYVP…VIGF, IAVT…MALL, MALV…YFAA, and IIKV…SFTV.

The protein belongs to the HAK/KUP transporter (TC 2.A.72) family.

The protein resides in the cell inner membrane. It catalyses the reaction K(+)(in) + H(+)(in) = K(+)(out) + H(+)(out). Transport of potassium into the cell. Likely operates as a K(+):H(+) symporter. The chain is Probable potassium transport system protein Kup from Rhodopseudomonas palustris (strain HaA2).